A 286-amino-acid chain; its full sequence is Elongation factor Ts (286 aa).

The interval 82-85 (TDFV) is involved in Mg(2+) ion dislocation from EF-Tu. Positions 212 to 286 (VAAQTGQKVE…SPSKKGKKKK (75 aa)) are disordered. Positions 215–227 (QTGQKVEQPQAAQ) are enriched in polar residues. Residues 253-269 (ETDSPAAETTTEPPKTT) are compositionally biased toward low complexity.

The protein belongs to the EF-Ts family.

The protein localises to the cytoplasm. Functionally, associates with the EF-Tu.GDP complex and induces the exchange of GDP to GTP. It remains bound to the aminoacyl-tRNA.EF-Tu.GTP complex up to the GTP hydrolysis stage on the ribosome. This chain is Elongation factor Ts, found in Gloeothece citriformis (strain PCC 7424) (Cyanothece sp. (strain PCC 7424)).